The sequence spans 433 residues: MTDISPREIVSELDRFIVGQADAKRAVSIALRNRWRRQQLTGPLREEVLPKNILMIGPTGVGKTEIARRLAKLANAPFLKIEATKFTEVGYVGRDVEQIVRDIVEVAINQTRERKRKDVQARAQLAAEERVLDALVGANASAATRDSFRKRLRSGELNDKEIEIETQTSGGGPMFEIPGMPGAQVGAISIGDIFGKMGGRTKTRRLTVSDSYEILINEESDKLLDSDQLTQEAIAAVENNGIVFLDEIDKICVRDGRSGGDVSREGVQRDLLPLIEGTTVSTKHGAVKTDHILFIASGAFHIAKPSDLLPELQGRLPIRVELDALTRDDLRRILTEPEASLIKQYVALMDTEGVVLDFTDDAVDALADIAVAVNSTVENIGARRLQTVMERVLDDISFTAPDRNGETVRIDAGYVQKNIGDLAKNADLSRFIL.

Residues V18, 60–65 (GVGKTE), D246, E311, and R383 contribute to the ATP site.

This sequence belongs to the ClpX chaperone family. HslU subfamily. In terms of assembly, a double ring-shaped homohexamer of HslV is capped on each side by a ring-shaped HslU homohexamer. The assembly of the HslU/HslV complex is dependent on binding of ATP.

The protein localises to the cytoplasm. Functionally, ATPase subunit of a proteasome-like degradation complex; this subunit has chaperone activity. The binding of ATP and its subsequent hydrolysis by HslU are essential for unfolding of protein substrates subsequently hydrolyzed by HslV. HslU recognizes the N-terminal part of its protein substrates and unfolds these before they are guided to HslV for hydrolysis. The sequence is that of ATP-dependent protease ATPase subunit HslU from Nitrobacter winogradskyi (strain ATCC 25391 / DSM 10237 / CIP 104748 / NCIMB 11846 / Nb-255).